We begin with the raw amino-acid sequence, 344 residues long: Ferredoxin--NADP reductase (344 aa).

Residues Ser-12, Asp-31, Lys-39, Tyr-43, Val-83, Ile-118, Asp-285, and Ser-326 each coordinate FAD.

It belongs to the ferredoxin--NADP reductase type 2 family. As to quaternary structure, homodimer. FAD is required as a cofactor.

The enzyme catalyses 2 reduced [2Fe-2S]-[ferredoxin] + NADP(+) + H(+) = 2 oxidized [2Fe-2S]-[ferredoxin] + NADPH. This is Ferredoxin--NADP reductase from Staphylococcus aureus (strain JH1).